The chain runs to 65 residues: Large ribosomal subunit protein bL35 (65 aa).

The protein belongs to the bacterial ribosomal protein bL35 family.

This chain is Large ribosomal subunit protein bL35, found in Alkalilimnicola ehrlichii (strain ATCC BAA-1101 / DSM 17681 / MLHE-1).